Consider the following 75-residue polypeptide: Putative antitoxin VapB12 (75 aa).

Its function is as follows. Putative antitoxin component of a possible type II toxin-antitoxin (TA) system. The cognate toxin is VapC12. This is Putative antitoxin VapB12 (vapB12) from Mycobacterium tuberculosis (strain CDC 1551 / Oshkosh).